The sequence spans 297 residues: MSWIERILGRTSSSSSSSKSKVPEGVWTKCTSCEQVLYSEELKRNMHVCPKCNHHMRFDARTRLLSLLDQDSAQEIAAELEPQDVLKFKDLKKYKDRLTAAQKQTGEKDSFITMYGTLHNMPVVVASFNFEFMGGSMGSVVGAKFVRAAERALADNIPFICFSASGGARMQEALFSLMQMAKTSAILAKMREKGIPFISVLTDPTLGGVSASLAMLGDINIAEPKALIGFAGPRVIEQTVREKLPEGFQRAEFLLEHGAIDMIVQRKDMRDTLARLCAKMTNKPTPFKTAELIVEEA.

A disordered region spans residues 1 to 23 (MSWIERILGRTSSSSSSSKSKVP). Residues 26–295 (VWTKCTSCEQ…PFKTAELIVE (270 aa)) enclose the CoA carboxyltransferase N-terminal domain. The Zn(2+) site is built by C30, C33, C49, and C52. Residues 30-52 (CTSCEQVLYSEELKRNMHVCPKC) form a C4-type zinc finger.

It belongs to the AccD/PCCB family. In terms of assembly, acetyl-CoA carboxylase is a heterohexamer composed of biotin carboxyl carrier protein (AccB), biotin carboxylase (AccC) and two subunits each of ACCase subunit alpha (AccA) and ACCase subunit beta (AccD). The cofactor is Zn(2+).

It localises to the cytoplasm. It carries out the reaction N(6)-carboxybiotinyl-L-lysyl-[protein] + acetyl-CoA = N(6)-biotinyl-L-lysyl-[protein] + malonyl-CoA. It participates in lipid metabolism; malonyl-CoA biosynthesis; malonyl-CoA from acetyl-CoA: step 1/1. Its function is as follows. Component of the acetyl coenzyme A carboxylase (ACC) complex. Biotin carboxylase (BC) catalyzes the carboxylation of biotin on its carrier protein (BCCP) and then the CO(2) group is transferred by the transcarboxylase to acetyl-CoA to form malonyl-CoA. The protein is Acetyl-coenzyme A carboxylase carboxyl transferase subunit beta of Actinobacillus pleuropneumoniae serotype 3 (strain JL03).